A 461-amino-acid polypeptide reads, in one-letter code: tRNA modification GTPase MnmE (461 aa).

(6S)-5-formyl-5,6,7,8-tetrahydrofolate contacts are provided by arginine 23, glutamate 88, and arginine 127. The 160-residue stretch at 223–382 folds into the TrmE-type G domain; the sequence is GLNTVIVGKP…VEEALVEIVY (160 aa). A K(+)-binding site is contributed by asparagine 233. GTP contacts are provided by residues 233–238, 252–258, and 277–280; these read NVGKSS, TEVPGTT, and DTAG. Position 237 (serine 237) interacts with Mg(2+). K(+)-binding residues include threonine 252, valine 254, and threonine 257. Threonine 258 serves as a coordination point for Mg(2+). (6S)-5-formyl-5,6,7,8-tetrahydrofolate is bound at residue lysine 461.

The protein belongs to the TRAFAC class TrmE-Era-EngA-EngB-Septin-like GTPase superfamily. TrmE GTPase family. Homodimer. Heterotetramer of two MnmE and two MnmG subunits. K(+) is required as a cofactor.

Its subcellular location is the cytoplasm. In terms of biological role, exhibits a very high intrinsic GTPase hydrolysis rate. Involved in the addition of a carboxymethylaminomethyl (cmnm) group at the wobble position (U34) of certain tRNAs, forming tRNA-cmnm(5)s(2)U34. The protein is tRNA modification GTPase MnmE of Alkaliphilus metalliredigens (strain QYMF).